The sequence spans 510 residues: ATP synthase subunit alpha (510 aa).

169–176 serves as a coordination point for ATP; that stretch reads GDRQTGKT.

This sequence belongs to the ATPase alpha/beta chains family. In terms of assembly, F-type ATPases have 2 components, CF(1) - the catalytic core - and CF(0) - the membrane proton channel. CF(1) has five subunits: alpha(3), beta(3), gamma(1), delta(1), epsilon(1). CF(0) has three main subunits: a(1), b(2) and c(9-12). The alpha and beta chains form an alternating ring which encloses part of the gamma chain. CF(1) is attached to CF(0) by a central stalk formed by the gamma and epsilon chains, while a peripheral stalk is formed by the delta and b chains.

The protein resides in the cell membrane. The catalysed reaction is ATP + H2O + 4 H(+)(in) = ADP + phosphate + 5 H(+)(out). Functionally, produces ATP from ADP in the presence of a proton gradient across the membrane. The alpha chain is a regulatory subunit. This chain is ATP synthase subunit alpha, found in Thermomicrobium roseum (strain ATCC 27502 / DSM 5159 / P-2).